Consider the following 273-residue polypeptide: 4-hydroxy-tetrahydrodipicolinate reductase (273 aa).

NAD(+) is bound by residues 12–17 and glutamate 38; that span reads GAGGRM. Residue arginine 39 coordinates NADP(+). Residues 102–104 and 126–129 contribute to the NAD(+) site; these read GTT and AANF. The Proton donor/acceptor role is filled by histidine 159. A (S)-2,3,4,5-tetrahydrodipicolinate-binding site is contributed by histidine 160. The active-site Proton donor is lysine 163. 169-170 serves as a coordination point for (S)-2,3,4,5-tetrahydrodipicolinate; it reads GT.

Belongs to the DapB family. As to quaternary structure, homotetramer.

It is found in the cytoplasm. The enzyme catalyses (S)-2,3,4,5-tetrahydrodipicolinate + NAD(+) + H2O = (2S,4S)-4-hydroxy-2,3,4,5-tetrahydrodipicolinate + NADH + H(+). The catalysed reaction is (S)-2,3,4,5-tetrahydrodipicolinate + NADP(+) + H2O = (2S,4S)-4-hydroxy-2,3,4,5-tetrahydrodipicolinate + NADPH + H(+). It functions in the pathway amino-acid biosynthesis; L-lysine biosynthesis via DAP pathway; (S)-tetrahydrodipicolinate from L-aspartate: step 4/4. Catalyzes the conversion of 4-hydroxy-tetrahydrodipicolinate (HTPA) to tetrahydrodipicolinate. In Pectobacterium atrosepticum (strain SCRI 1043 / ATCC BAA-672) (Erwinia carotovora subsp. atroseptica), this protein is 4-hydroxy-tetrahydrodipicolinate reductase.